The sequence spans 1140 residues: MWLKPEEVLLKNALKLWVTQKSSCYFILQRRRGHGEGGGRLTGRLVGALDAVLDSNARVAPFRILLQVPGSQVYSPIACGATLEEINQHWDWLEQNLLHTLSVFDNKDDIASFVKGKVKALIAEETSSRLAEQEEEPEKFREALVKFEARFNFPEAEKLVTYYSCCCWKGRVPRQGWLYLSINHLCFYSFFLGKELKLVVPWVDIQKLERTSNVFLTDTIRITTQNKERDFSMFLNLDEVFKVMEQLADVTLRRLLDNEVFDLDPDLQEPSQITKRDLEARAQNEFFRAFFRLPRKEKLHAVVDCSLWTPFSRCHTTGRMFASDSYICFASREDGCCKIILPLREVVSIEKMEDTSLLPHPIIVSIRSKVAFQFIELRDRDSLVEALLARLKQVHANHPVHYDTSADDDMASLVFHSTSMCSDHRFGDLEMMSSQNSEESEKEKSPLMHPDALVTAFQQSGSQSPDSRMSREQIKISLWNDHFVEYGRTVCMFRTEKIRKLVAMGIPESLRGRLWLLFSDAVTDLASHPGYYGNLVEESLGKCCLVTEEIERDLHRSLPEHPAFQNETGIAALRRVLTAYAHRNPKIGYCQSMNILTSVLLLYTKEEEAFWLLVAVCERMLPDYFNHRVIGAQVDQSVFEELIKGHLPELAEHMNDLSALASVSLSWFLTLFLSIMPLESAVNVVDCFFYDGIKAIFQLGLAVLEANAEDLCSSKDDGQALMILSRFLDHIKNEDSPGPPVGSHHAFFSDDQEPYPVTDISDLIRDSYEKFGDQSVEQIEHLRYKHRIRVLQGHEDTTKQNVLRVVIPEVSILPEDLEELYDLFKREHMMSCYWEQPRPMASRHDPSRPYAEQYRIDARQFAHLFQLVSPWTCGAHTEILAERTFRLLDDNMDQLIEFKAFVSCLDIMYNGEMNEKIKLLYRLHIPPALTENDRDSQSPLRNPLLSTSRPLVFGKPNGDAVDYQKQLKQMIKDLAKEKDKTEKELPKMSQREFIQFCKTLYSMFHEDPEENDLYQAIATVTTLLLQIGEVGQRGSSSGSCSQECGEELRASAPSPEDSVFADTGKTPQDSQAFPEAAERDWTVSLEHILASLLTEQSLVNFFEKPLDMKSKLENAKINQYNLKTFEMSHQSQSELKLSNL.

2 consecutive GRAM domains span residues 145–212 (VKFE…ERTS) and 285–353 (EFFR…EKME). One can recognise a Rab-GAP TBC domain in the interval 505 to 692 (GIPESLRGRL…NVVDCFFYDG (188 aa)). Positions 1031–1070 (GQRGSSSGSCSQECGEELRASAPSPEDSVFADTGKTPQDS) are disordered. Residues 1032–1043 (QRGSSSGSCSQE) show a composition bias toward low complexity.

In terms of biological role, may act as a GTPase-activating protein for Rab family protein(s). In Homo sapiens (Human), this protein is TBC1 domain family member 8 (TBC1D8).